We begin with the raw amino-acid sequence, 896 residues long: Translation initiation factor IF-2 (896 aa).

A disordered region spans residues 1-260 (MDIENTNKPD…AQTNKKAHKA (260 aa)). A compositionally biased stretch (basic and acidic residues) spans 19-34 (KAADSKPESGKTDSKR). A compositionally biased stretch (low complexity) spans 56–66 (EESSGGKASGK). Basic and acidic residues predominate over residues 85-136 (SVKEKKPDERLEETKKTAPRFEDKKSDAPSAQNEKRSFDSAKKEEKQTERKK). Residues 168–177 (RGQGNRPQRP) show a composition bias toward low complexity. Residues 375–544 (PRPPVVTIMG…LLQAEVLELK (170 aa)) enclose the tr-type G domain. The interval 384–391 (GHVDHGKT) is G1. 384 to 391 (GHVDHGKT) is a GTP binding site. The interval 409–413 (GITQH) is G2. Positions 430–433 (DTPG) are G3. GTP contacts are provided by residues 430 to 434 (DTPGH) and 484 to 487 (NKVD). The segment at 484 to 487 (NKVD) is G4. Positions 520–522 (SAL) are G5. The segment at 877–896 (SDSEKYKAPEIKEEGTETDE) is disordered.

It belongs to the TRAFAC class translation factor GTPase superfamily. Classic translation factor GTPase family. IF-2 subfamily.

Its subcellular location is the cytoplasm. Functionally, one of the essential components for the initiation of protein synthesis. Protects formylmethionyl-tRNA from spontaneous hydrolysis and promotes its binding to the 30S ribosomal subunits. Also involved in the hydrolysis of GTP during the formation of the 70S ribosomal complex. The chain is Translation initiation factor IF-2 from Treponema denticola (strain ATCC 35405 / DSM 14222 / CIP 103919 / JCM 8153 / KCTC 15104).